We begin with the raw amino-acid sequence, 156 residues long: ATP synthase subunit b 1 (156 aa).

Residues 7–27 (LFLQAIVFAILVWFTMKFVWP) traverse the membrane as a helical segment.

The protein belongs to the ATPase B chain family. F-type ATPases have 2 components, F(1) - the catalytic core - and F(0) - the membrane proton channel. F(1) has five subunits: alpha(3), beta(3), gamma(1), delta(1), epsilon(1). F(0) has three main subunits: a(1), b(2) and c(10-14). The alpha and beta chains form an alternating ring which encloses part of the gamma chain. F(1) is attached to F(0) by a central stalk formed by the gamma and epsilon chains, while a peripheral stalk is formed by the delta and b chains.

Its subcellular location is the cell inner membrane. F(1)F(0) ATP synthase produces ATP from ADP in the presence of a proton or sodium gradient. F-type ATPases consist of two structural domains, F(1) containing the extramembraneous catalytic core and F(0) containing the membrane proton channel, linked together by a central stalk and a peripheral stalk. During catalysis, ATP synthesis in the catalytic domain of F(1) is coupled via a rotary mechanism of the central stalk subunits to proton translocation. In terms of biological role, component of the F(0) channel, it forms part of the peripheral stalk, linking F(1) to F(0). This chain is ATP synthase subunit b 1, found in Albidiferax ferrireducens (strain ATCC BAA-621 / DSM 15236 / T118) (Rhodoferax ferrireducens).